A 425-amino-acid polypeptide reads, in one-letter code: Paired box pox-neuro protein (425 aa).

Residues 5–132 constitute a DNA-binding region (paired); it reads GQAGVNQLGG…SSINRILRNS (128 aa). The interval 8 to 64 is PAI subdomain; the sequence is GVNQLGGVFVNGRPLPDCVRRRIVDLALCGVRPCDISRQLLVSHGCVSKILTRFYET. The segment at 84–132 is RED subdomain; sequence TVVKKIIRLKEENSGMFAWEIREQLQQQRVCDPSSVPSISSINRILRNS. Disordered regions lie at residues 159 to 188, 297 to 358, and 383 to 425; these read QAGS…AATP, TKSE…RKRN, and LESS…EVVN. The span at 172–185 shows a compositional bias: pro residues; it reads APPPPVTVAPPTPA. Low complexity-rich tracts occupy residues 323–332 and 340–349; these read SSPAALSLTA and GSAPEASPGS. The segment covering 402–425 has biased composition (acidic residues); sequence TPEDEDPAEAEEEQEEEDSVEVVN.

Central and peripheral nervous systems.

The protein localises to the nucleus. Functionally, transcriptional regulator that specifies poly-innervated organs (chemosensory bristle). Also controls the number of neurons. The chain is Paired box pox-neuro protein (Poxn) from Drosophila melanogaster (Fruit fly).